The following is a 334-amino-acid chain: GTPase Obg (334 aa).

The Obg domain occupies 1 to 159 (MRFVDEVVIK…KEVRLELNLL (159 aa)). Residues 160-331 (ADVALLGLPN…LAKKLNEFLQ (172 aa)) enclose the OBG-type G domain. GTP contacts are provided by residues 166–173 (GLPNAGKS), 191–195 (FTTMY), 212–215 (DIPG), 282–285 (NKID), and 312–314 (SAA). Mg(2+) is bound by residues Ser-173 and Thr-193.

This sequence belongs to the TRAFAC class OBG-HflX-like GTPase superfamily. OBG GTPase family. In terms of assembly, monomer. It depends on Mg(2+) as a cofactor.

The protein resides in the cytoplasm. An essential GTPase which binds GTP, GDP and possibly (p)ppGpp with moderate affinity, with high nucleotide exchange rates and a fairly low GTP hydrolysis rate. Plays a role in control of the cell cycle, stress response, ribosome biogenesis and in those bacteria that undergo differentiation, in morphogenesis control. The sequence is that of GTPase Obg from Francisella tularensis subsp. mediasiatica (strain FSC147).